We begin with the raw amino-acid sequence, 130 residues long: Small ribosomal subunit protein uS11 (130 aa).

It belongs to the universal ribosomal protein uS11 family. As to quaternary structure, part of the 30S ribosomal subunit. Interacts with proteins S7 and S18. Binds to IF-3.

Located on the platform of the 30S subunit, it bridges several disparate RNA helices of the 16S rRNA. Forms part of the Shine-Dalgarno cleft in the 70S ribosome. This is Small ribosomal subunit protein uS11 from Shewanella frigidimarina (strain NCIMB 400).